The sequence spans 330 residues: MISLESQVLERHLSFFDGKSVLFAGGISDNFPQTLASKCSSIQIWSCYFDYARTQSAVNFSVEFQGQADLIVYYWTKNKQEVNFQLLQLLAQASIGQEILIIGENRCGVRSVEKTLAPYGEIAKIDSARRCGLYHFSLQNKPHFELKNFWRTYQHSTLENLTIYSLPGVFSAAELDTGTELLLSTIDNKIKGKVLDLGCGAGVIGSMIKKRAPNAQITMTDIHAMALESARKTLSENQLQGEVYASDVFSDIEGKFDLIISNPPFHDGIDTAYRTVKELITQAKWHLNQGGELRIVANAFLPYPELLRQYFNDYQVLAQTGKFKVYSVKN.

It belongs to the methyltransferase superfamily. RsmC family. In terms of assembly, monomer.

The protein localises to the cytoplasm. It catalyses the reaction guanosine(1207) in 16S rRNA + S-adenosyl-L-methionine = N(2)-methylguanosine(1207) in 16S rRNA + S-adenosyl-L-homocysteine + H(+). Its function is as follows. Specifically methylates the guanine in position 1207 of 16S rRNA in the 30S particle. The chain is Ribosomal RNA small subunit methyltransferase C from Haemophilus influenzae (strain PittGG).